Here is a 137-residue protein sequence, read N- to C-terminus: Seminal plasma sperm motility inhibitor (137 aa).

Residues 1 to 21 (MKLGSAIPWALLLSTXTLVST) form the signal peptide. A disulfide bond links cysteine 30 and cysteine 51. The 102-residue stretch at 30–131 (CGGFLKNYSG…SSFNVYFYGI (102 aa)) folds into the CUB domain. A glycan (N-linked (GlcNAc...) asparagine) is linked at asparagine 36.

It belongs to the spermadhesin family. Seminal plasma or sperm.

The protein localises to the secreted. Functionally, inhibitor of sperm motility. This is Seminal plasma sperm motility inhibitor (SPMI) from Sus scrofa (Pig).